We begin with the raw amino-acid sequence, 196 residues long: Cupin-domain-containing oxidoreductase srdB (196 aa).

Positions 92-156 (DFAPGCKSNM…TSDEKPARML (65 aa)) constitute a Cupin type-2 domain.

It belongs to the virC family.

Its function is as follows. Cupin-domain-containing oxidoreductase; part of the gene cluster that mediates the biosynthesis of sordarial, a salicylic aldehyde structurally related to the phytotoxin pyriculol. The most interesting aspect of this pathway is formation of an aromatic product from the highly reducing polyketide synthase srdA. SrdA synthesizes a reduced polyketide chain from one molecule of acetyl-CoA and five molecules of malonyl-CoA. The polyketide chain is then reductively released as an aldehyde. The oxidoreductases srdC, srdD and srdE then oxidize one of the hydroxy groups to facilitate the intramolecular aldol condensation, followed by dehydration to yield a salicylic aldehyde. This aldehyde can undergo facile reduction by endogenous reductases to yield the alcohol 1-hydroxy-2-hydroxymethyl-3-pent-1,3-dienylbenzene. The flavin-dependent srdI counteract against the propensity of the aldehydes to be reduced under physiological conditions and is responsible for reoxidizing 1-hydroxy-2-hydroxymethyl-3-pent-1,3-dienylbenzene back to the salicylic aldehyde. This salicylic aldehyde is then selectively epoxidized by the cupin-domain-containing oxidoreductase srdB to yield the epoxide, which can be hydrolyzed stereoselectively by the hydrolase srdG to give the final product sordarial. This is Cupin-domain-containing oxidoreductase srdB from Neurospora crassa (strain ATCC 24698 / 74-OR23-1A / CBS 708.71 / DSM 1257 / FGSC 987).